We begin with the raw amino-acid sequence, 217 residues long: UPF0323 lipoprotein HPP12_0232 (217 aa).

Positions methionine 1 to glycine 27 are cleaved as a signal peptide. The N-palmitoyl cysteine moiety is linked to residue cysteine 28. Cysteine 28 carries the S-diacylglycerol cysteine lipid modification. A compositionally biased stretch (polar residues) spans glutamine 160–arginine 171. The interval glutamine 160 to serine 217 is disordered. A compositionally biased stretch (low complexity) spans serine 172–serine 185. Residues methionine 186 to phenylalanine 197 show a composition bias toward polar residues. Residues serine 199–serine 210 show a composition bias toward low complexity.

This sequence belongs to the UPF0323 family.

The protein resides in the cell membrane. The sequence is that of UPF0323 lipoprotein HPP12_0232 from Helicobacter pylori (strain P12).